A 1005-amino-acid polypeptide reads, in one-letter code: Beta/gamma crystallin domain-containing protein 3 (1005 aa).

Serine 122, serine 129, serine 130, serine 136, and serine 140 each carry phosphoserine. 2 disordered regions span residues 132 to 159 and 173 to 198; these read EDVL…PSSV and NFDG…DWRT. The span at 180–189 shows a compositional bias: acidic residues; sequence QEAEEEEEEA. Beta/gamma crystallin 'Greek key' domains are found at residues 367-416, 462-500, 512-556, 557-599, 605-647, 648-690, 701-737, 738-781, and 828-869; these read GCWI…KRVL, GVWL…HPLQ, LKVI…RVIG, GVWV…RYLQ, SSIT…HVKS, GVWV…RPIQ, HLLK…KVLR, GCWL…QPID, and GLWI…RPMK. A Ricin B-type lectin domain is found at 871 to 1003; the sequence is PAVYIRIRNR…GEETQKWDIE (133 aa).

Belongs to the beta/gamma-crystallin family.

The polypeptide is Beta/gamma crystallin domain-containing protein 3 (Crybg3) (Mus musculus (Mouse)).